A 288-amino-acid polypeptide reads, in one-letter code: Pantothenate synthetase (288 aa).

Position 30–37 (30–37) interacts with ATP; the sequence is MGNLHNGH. Residue His37 is the Proton donor of the active site. Gln61 contacts (R)-pantoate. Gln61 contributes to the beta-alanine binding site. Residue 149–152 coordinates ATP; the sequence is GQKD. Position 155 (Gln155) interacts with (R)-pantoate. Residues Val178 and 186–189 each bind ATP; that span reads LSSR.

Belongs to the pantothenate synthetase family. As to quaternary structure, homodimer.

It localises to the cytoplasm. It carries out the reaction (R)-pantoate + beta-alanine + ATP = (R)-pantothenate + AMP + diphosphate + H(+). Its pathway is cofactor biosynthesis; (R)-pantothenate biosynthesis; (R)-pantothenate from (R)-pantoate and beta-alanine: step 1/1. Its function is as follows. Catalyzes the condensation of pantoate with beta-alanine in an ATP-dependent reaction via a pantoyl-adenylate intermediate. The protein is Pantothenate synthetase of Tolumonas auensis (strain DSM 9187 / NBRC 110442 / TA 4).